The primary structure comprises 295 residues: Nucleotide-binding protein BH3569 (295 aa).

14 to 21 (GMSGAGKT) contributes to the ATP binding site. A GTP-binding site is contributed by 65 to 68 (DLRG).

This sequence belongs to the RapZ-like family.

Displays ATPase and GTPase activities. The protein is Nucleotide-binding protein BH3569 of Halalkalibacterium halodurans (strain ATCC BAA-125 / DSM 18197 / FERM 7344 / JCM 9153 / C-125) (Bacillus halodurans).